A 122-amino-acid polypeptide reads, in one-letter code: Large ribosomal subunit protein uL14 (122 aa).

This sequence belongs to the universal ribosomal protein uL14 family. As to quaternary structure, part of the 50S ribosomal subunit. Forms a cluster with proteins L3 and L19. In the 70S ribosome, L14 and L19 interact and together make contacts with the 16S rRNA in bridges B5 and B8.

In terms of biological role, binds to 23S rRNA. Forms part of two intersubunit bridges in the 70S ribosome. The sequence is that of Large ribosomal subunit protein uL14 from Chloroflexus aurantiacus (strain ATCC 29366 / DSM 635 / J-10-fl).